A 494-amino-acid polypeptide reads, in one-letter code: MAAKQTEPVTIISLRKLSQAAPEPQQKETKTFTVEDAVETIGFGRFHIALFLIMGSTGVVEAMEIMLIAVVSPVIRCEWQLENWQVAFVTTMVFFGYMVSSILFGLLADRYGRWKILLLSFLWGAYFSLLTSFSPSYIWFVFLRTMVGCGVSGHAQGLIIKTEFLPTKYRGYMLPLSQVFWLAGSLLIISMASVVIPTIGWRWLIRIASIPGIILIMAFKFIPESARFNVSTGNTQAALNTLESIAKMNRSVMPEGQLVEPILEKRGRFADLLDSKYLRTTLQIWIIWLGISFAYYGVILASAELLERDLVCGSKSESEPEVVETTGDSGEGLSPCYCHIFAPSDYRTMIISTLGEIALNPLNILGINFLGRRLSLSITMGCTALFFLLLNICTSSAGLIGFLFMLRALVAANFNTIYIYTAEVYPTPMRAIGMGTSGSLCRIGAMVAPFISQVLMSASFLGALCLFSSVCVVCAISAFTLPIETKGRALQQIK.

A run of 10 helical transmembrane segments spans residues 48-68 (IALF…IMLI), 86-106 (VAFV…LFGL), 121-141 (FLWG…IWFV), 179-199 (VFWL…IPTI), 203-223 (WLIR…KFIP), 281-301 (TLQI…VILA), 350-370 (IIST…INFL), 385-405 (LFFL…FLFM), 431-451 (AIGM…APFI), and 460-480 (FLGA…SAFT).

The protein belongs to the major facilitator superfamily.

It is found in the membrane. This is Putative transporter SVOPL (Svopl) from Mus musculus (Mouse).